The sequence spans 152 residues: MANLQERLTDIIRPAVEALEFELWGVEFIRAGKFSTLRVYIDHPEGISVDNCADVSYQVSSLLDVEDPINVEYNLEVSSPGMERPFFNAQQMQPYINETVAFELVAAQKNKRKFKAELIAVEGEELTLAVDNDTLQVNMRDVKNAHLVPAFD.

It belongs to the RimP family.

It localises to the cytoplasm. Its function is as follows. Required for maturation of 30S ribosomal subunits. The polypeptide is Ribosome maturation factor RimP (Idiomarina loihiensis (strain ATCC BAA-735 / DSM 15497 / L2-TR)).